We begin with the raw amino-acid sequence, 768 residues long: DNA ligase (768 aa).

NAD(+) is bound by residues 30-34 (DAEYD), 79-80 (SL), and glutamate 190. The active-site N6-AMP-lysine intermediate is lysine 192. Arginine 213, glutamate 250, lysine 367, and lysine 391 together coordinate NAD(+). The Zn(2+) site is built by cysteine 485, cysteine 488, cysteine 503, and cysteine 509. The BRCT domain maps to 678 to 767 (AAEQPLSGLS…IPPEIQARMQ (90 aa)).

It belongs to the NAD-dependent DNA ligase family. LigA subfamily. Requires Mg(2+) as cofactor. It depends on Mn(2+) as a cofactor.

The enzyme catalyses NAD(+) + (deoxyribonucleotide)n-3'-hydroxyl + 5'-phospho-(deoxyribonucleotide)m = (deoxyribonucleotide)n+m + AMP + beta-nicotinamide D-nucleotide.. DNA ligase that catalyzes the formation of phosphodiester linkages between 5'-phosphoryl and 3'-hydroxyl groups in double-stranded DNA using NAD as a coenzyme and as the energy source for the reaction. It is essential for DNA replication and repair of damaged DNA. The chain is DNA ligase from Magnetococcus marinus (strain ATCC BAA-1437 / JCM 17883 / MC-1).